Here is a 340-residue protein sequence, read N- to C-terminus: Nicotinate-nucleotide--dimethylbenzimidazole phosphoribosyltransferase (340 aa).

The Proton acceptor role is filled by E305.

The protein belongs to the CobT family.

It carries out the reaction 5,6-dimethylbenzimidazole + nicotinate beta-D-ribonucleotide = alpha-ribazole 5'-phosphate + nicotinate + H(+). The protein operates within nucleoside biosynthesis; alpha-ribazole biosynthesis; alpha-ribazole from 5,6-dimethylbenzimidazole: step 1/2. In terms of biological role, catalyzes the synthesis of alpha-ribazole-5'-phosphate from nicotinate mononucleotide (NAMN) and 5,6-dimethylbenzimidazole (DMB). The polypeptide is Nicotinate-nucleotide--dimethylbenzimidazole phosphoribosyltransferase (Allorhizobium ampelinum (strain ATCC BAA-846 / DSM 112012 / S4) (Agrobacterium vitis (strain S4))).